A 175-amino-acid polypeptide reads, in one-letter code: NADH-quinone oxidoreductase subunit B (175 aa).

Residues Cys54, Cys55, Cys119, and Cys149 each coordinate [4Fe-4S] cluster.

It belongs to the complex I 20 kDa subunit family. NDH-1 is composed of at least 14 different subunits, Nqo1 to Nqo14. The complex has a L-shaped structure, with the hydrophobic arm (subunits Nqo7, Nqo8, Nqo10 to Nqo14) embedded in the inner membrane and the hydrophilic peripheral arm (subunits Nqo1 to Nqo6, Nqo9) protruding into the bacterial cytoplasm. The hydrophilic domain contains all the redox centers. NADH-quinone oxidoreductase forms a supercomplex with ubiquinol-cytochrome c reductase complex (complex III or cytochrome b-c1 complex) and cytochrome c oxidase (complex IV), which stabilizes the NADH-quinone oxidoreductase complex. [4Fe-4S] cluster is required as a cofactor.

Its subcellular location is the cell inner membrane. It carries out the reaction a quinone + NADH + 5 H(+)(in) = a quinol + NAD(+) + 4 H(+)(out). NDH-1 shuttles electrons from NADH, via FMN and iron-sulfur (Fe-S) centers, to quinones in the respiratory chain. The immediate electron acceptor for the enzyme in this species is believed to be ubiquinone. Couples the redox reaction to proton translocation (for every two electrons transferred, four hydrogen ions are translocated across the cytoplasmic membrane), and thus conserves the redox energy in a proton gradient. The protein is NADH-quinone oxidoreductase subunit B of Paracoccus denitrificans (strain Pd 1222).